The chain runs to 552 residues: Putative transport protein APJL_0985 (552 aa).

A run of 5 helical transmembrane segments spans residues 4–24 (IAII…IGHI), 29–49 (VGLG…CTHL), 65–85 (FGLI…FFAS), 95–115 (GFAV…HKLF), and 161–181 (IAYP…RIIF). 2 RCK C-terminal domains span residues 190–275 (QEFD…ILGE) and 277–360 (ADVS…IIGD). 6 helical membrane-spanning segments follow: residues 370 to 390 (MLPI…PLYL), 403 to 425 (GGPL…YWFM), 438 to 458 (IVLF…DTLL), 463 to 483 (LAWM…TGFV), 492 to 512 (YLSL…LAFA), and 529 to 549 (VYPL…ILLW).

The protein belongs to the AAE transporter (TC 2.A.81) family. YidE subfamily.

Its subcellular location is the cell membrane. The chain is Putative transport protein APJL_0985 from Actinobacillus pleuropneumoniae serotype 3 (strain JL03).